A 496-amino-acid chain; its full sequence is Fibronectin type III and SPRY domain-containing protein 1 (496 aa).

Positions 4 to 99 (QREALRKIIT…ALESSEELLE (96 aa)) form a coiled coil. The COS domain maps to 105 to 162 (LQAMDREDFPQAAKQIKDGVTMAPAFRLSLKAKVSDNMSHLMVDFAQERQMLQALKFL). Residues 164–268 (VPSAPVIDLA…EPVTLETPAF (105 aa)) form the Fibronectin type-III domain. A B30.2/SPRY domain is found at 268–477 (FMFRLDASTS…VTTGLQVPSS (210 aa)). A disordered region spans residues 301–336 (KAREKDGKGRTASPINSPARGTPSPKRMPSGRGGRD). Residues arginine 310 and arginine 320 each carry the omega-N-methylarginine modification.

Oligomerization is required for binding to microtubules.

The protein resides in the cytoplasm. Its subcellular location is the cytoskeleton. It is found in the microtubule organizing center. It localises to the centrosome. The protein localises to the nucleus. The protein resides in the cleavage furrow. In terms of biological role, may be involved in microtubule organization and stabilization. This Macaca fascicularis (Crab-eating macaque) protein is Fibronectin type III and SPRY domain-containing protein 1 (FSD1).